The chain runs to 400 residues: Cartilage-associated protein (400 aa).

The first 25 residues, 1-25 (MGPRSPTAALLVLLCVGCAPTPGRG), serve as a signal peptide directing secretion. N-linked (GlcNAc...) asparagine glycans are attached at residues Asn-86 and Asn-362.

The protein belongs to the leprecan family. As to expression, found in articular chondrocytes. Expressed in a variety of tissues.

The protein localises to the secreted. It is found in the extracellular space. It localises to the extracellular matrix. Functionally, necessary for efficient 3-hydroxylation of fibrillar collagen prolyl residues. The sequence is that of Cartilage-associated protein (Crtap) from Mus musculus (Mouse).